The chain runs to 1255 residues: MENLNRKKAIKIELANPDTIRSWSHGEVLKPETINYKTLKAEKDGLFDERIFGPTKNYECVCGRYKKANPMNKGKKCEKCGVELTESIVRRERMGHIELEEPVTHIWMLKVAPYRIAAILDLKAKELEEVVYFVSHIVLEQGNQSHFLEKEVLDLGSSRITKTREKLQLSILDVIDQINDPEHRDTKKANRLLEELKNTSIPFSIDEATSLISKYTNAKFGIGARAVEYLLEKVDLTKEIEAIKIQLENSKKTPNERTKLLKRLETFDSLKRSKQRPEWMVMRVIPVIPPDIRPIIQLDGGRFTTSEINDLYRRIIIRNERLKKVKEMGAPSIIVNNEKRMLQEAVDALFDNERKPKPVQGKNKRPLKSLTSVLKGKQGRFRQNLLGKRVDYSARSVIAIGPDLKMYQAGLPREMAITLFKPFVIQWLQDHEYAENVKIAEKMLLQNDPKVWEALEQVIKDRPVLLNRAPTLHRLGIQAFEPKLVKGKAIRLHPLVTTAFNADFDGDQMAVHVPITKEAVAESRALMLGSSAILGPKDGKAIVTPGQDIILGNYYLTTEEKNAKGQGMIFSSLDEAFMAYNSGQIHLNSLIGIALSALPEEKFSDKNQRLNSYLLTTVGKLYFNQIFDDNFPWINSNNIWNAKEAVKEFIYDFSQDIDKVIENVQVQQPIKKKELSLIIERYFETHGARKTAEMLDKMKDLGFSFSTKSGTTISAGDVVAFTHKYDEFKEADQKVEQITDFYNMGMLTNSEKKRRIIDVWSEVKDKIQNELATVLRKDVKNPIFVMVDSGARGNVSNFTQLVGMRGLMNDTKGDIKEIPIKSSFREGLTVSEYFVSTHGARKGMADIALKTADSGYLTRRLVDVSQEIVVVNEDCEPTKGFEVSAIIDTKHDNVIVPLKDRLVGRFTFEDIYDDDKNLVASANTLIDKNIAEKIIMSGISSVIIRSVLTCDNKRGVCQKCYGLNLATASVVNIGEPVGVIAAQSIGEPGTQLTMRNFHTGGVAGNVDITQGLPRIKELLDVTTPKGAVAIISEVDGVVSEIEDYNGVFVINIVTENEEVKKYKTEFNSVLRVEQGSSVMAGQKLTEGAIDLHQLLEFGGIQDVQNYILKEVQKVYRLQGIEISDKYIEIIIKQMLNKVKITDSGDSDLLPGEIITIQNYKEVVQDCIVKSIRPPLSKAQIFGIKKAPLESSSWLSSASFQDTARVLTRAIIKGKEDKLEGLKENIMLGNLIPAGTGLTGTQEVEQLAEQYHNNEY.

Zn(2+)-binding residues include cysteine 60, cysteine 62, cysteine 77, and cysteine 80. Aspartate 503, aspartate 505, and aspartate 507 together coordinate Mg(2+). Cysteine 875, cysteine 950, cysteine 957, and cysteine 960 together coordinate Zn(2+).

Belongs to the RNA polymerase beta' chain family. The RNAP catalytic core consists of 2 alpha, 1 beta, 1 beta' and 1 omega subunit. When a sigma factor is associated with the core the holoenzyme is formed, which can initiate transcription. Mg(2+) serves as cofactor. Zn(2+) is required as a cofactor.

The catalysed reaction is RNA(n) + a ribonucleoside 5'-triphosphate = RNA(n+1) + diphosphate. Functionally, DNA-dependent RNA polymerase catalyzes the transcription of DNA into RNA using the four ribonucleoside triphosphates as substrates. The protein is DNA-directed RNA polymerase subunit beta' of Mycoplasma capricolum subsp. capricolum (strain California kid / ATCC 27343 / NCTC 10154).